An 804-amino-acid polypeptide reads, in one-letter code: G-type lectin S-receptor-like serine/threonine-protein kinase LECRK4 (804 aa).

An N-terminal signal peptide occupies residues 1-23; that stretch reads MAPPLFLLSLQLLVLLSSPSAQA. Residues 24–150 form the Bulb-type lectin domain; the sequence is QNISLGTSLT…GGSTISWETF (127 aa). Residues 24–458 are Extracellular-facing; that stretch reads QNISLGTSLT…DKKLWILGSS (435 aa). 6 N-linked (GlcNAc...) asparagine glycosylation sites follow: asparagine 25, asparagine 58, asparagine 216, asparagine 227, asparagine 238, and asparagine 243. The EGF-like; atypical domain occupies 290 to 341; that stretch reads PENICNAQTKVGSGTCGFNSYCMFDGSNNQTSCVCPEQYSFFDEVRKYRGCR. Intrachain disulfides connect cysteine 294-cysteine 311, cysteine 305-cysteine 322, cysteine 324-cysteine 340, cysteine 386-cysteine 406, and cysteine 390-cysteine 396. Asparagine 318 is a glycosylation site (N-linked (GlcNAc...) asparagine). The PAN domain maps to 349 to 426; sequence CDLDEAASMA…IMGSGVQRTV (78 aa). Asparagine 434 carries N-linked (GlcNAc...) asparagine glycosylation. A helical membrane pass occupies residues 459 to 479; that stretch reads LLLGGSVIANFALSSVLLFGT. The Cytoplasmic portion of the chain corresponds to 480 to 804; it reads YCTITRKDVQ…DSSSVVNSFP (325 aa). The Protein kinase domain maps to 514-790; it reads DGFKEVLGTG…TQMLDGADAI (277 aa). ATP is bound by residues 520-528 and lysine 544; that span reads LGTGASGIV. Catalysis depends on aspartate 638, which acts as the Proton acceptor.

This sequence belongs to the protein kinase superfamily. Ser/Thr protein kinase family.

It localises to the membrane. The catalysed reaction is L-seryl-[protein] + ATP = O-phospho-L-seryl-[protein] + ADP + H(+). It catalyses the reaction L-threonyl-[protein] + ATP = O-phospho-L-threonyl-[protein] + ADP + H(+). Does not seem to be involved in resistance against the herbivorous insect brown planthopper (N.lugens, BPH). This chain is G-type lectin S-receptor-like serine/threonine-protein kinase LECRK4, found in Oryza sativa subsp. indica (Rice).